The sequence spans 577 residues: Cleavage stimulation factor subunit 2 (577 aa).

Ser14 bears the Phosphoserine mark. The RRM domain maps to 16-94 (RSVFVGNIPY…RALRVDNAAS (79 aa)). Residues 108–248 (APVIESPYGE…VNGAPPLMQA (141 aa)) are interactions with CSTF3 and SYMPK. Lys189 participates in a covalent cross-link: Glycyl lysine isopeptide (Lys-Gly) (interchain with G-Cter in SUMO2). The tract at residues 207–230 (PVHGAGPGSGSNVSMNQQNPQAPQ) is disordered. Residue Arg308 is modified to Omega-N-methylarginine. The interval 319–409 (RGLLGDAPND…DGRGGRDPRG (91 aa)) is disordered. The span at 360-373 (PGHESRGPPPHELR) shows a compositional bias: basic and acidic residues. The stretch at 410-414 (IDARG) is one 1; approximate repeat. The segment at 410–469 (IDARGMEARAMEARGLDARGLEARAMEARAMEARAMEARAMEARAMEVRGMEARGMDTRG) is 12 X 5 AA tandem repeats of M-E-A-R-[AG]. 2 repeat units span residues 415 to 419 (MEARA) and 420 to 424 (MEARG). One copy of the 4; approximate repeat lies at 425–429 (LDARG). Residues 430-434 (LEARA) form a 5; approximate repeat. A run of 4 repeats spans residues 435–439 (MEARA), 440–444 (MEARA), 445–449 (MEARA), and 450–454 (MEARA). One copy of the 10; approximate repeat lies at 455–459 (MEVRG). The stretch at 460–464 (MEARG) is repeat 11. Residues 465–469 (MDTRG) form a 12; approximate repeat. Residues Arg468 and Arg475 each carry the omega-N-methylarginine modification. The segment at 509–532 (LQGASIQGGSQPGGFSPGQNQVTP) is disordered. Residues 514–577 (IQGGSQPGGF…EQIQKSTGAP (64 aa)) form an interaction with RPO2TC1 region. Residues Ser518 and Ser524 each carry the phosphoserine modification.

The CSTF complex is composed of CSTF1 (50 kDa subunit), CSTF2 (64 kDa subunit) and CSTF3 (77 kDa subunit). CSTF2 directly interacts with CSTF3, SYMPK and RPO2TC1. Interacts with HSF1 in heat-stressed cells. Interacts with CPSF2, CPSF3 and FIP1L1. Interacts with DDX1.

Its subcellular location is the nucleus. One of the multiple factors required for polyadenylation and 3'-end cleavage of mammalian pre-mRNAs. This subunit is directly involved in the binding to pre-mRNAs. The protein is Cleavage stimulation factor subunit 2 (CSTF2) of Pongo abelii (Sumatran orangutan).